Reading from the N-terminus, the 284-residue chain is Bifunctional protein FolD (284 aa).

Residues 165–167, Ser190, and Ile231 each bind NADP(+); that span reads GRS.

It belongs to the tetrahydrofolate dehydrogenase/cyclohydrolase family. Homodimer.

The enzyme catalyses (6R)-5,10-methylene-5,6,7,8-tetrahydrofolate + NADP(+) = (6R)-5,10-methenyltetrahydrofolate + NADPH. The catalysed reaction is (6R)-5,10-methenyltetrahydrofolate + H2O = (6R)-10-formyltetrahydrofolate + H(+). Its pathway is one-carbon metabolism; tetrahydrofolate interconversion. Catalyzes the oxidation of 5,10-methylenetetrahydrofolate to 5,10-methenyltetrahydrofolate and then the hydrolysis of 5,10-methenyltetrahydrofolate to 10-formyltetrahydrofolate. This Clostridium kluyveri (strain ATCC 8527 / DSM 555 / NBRC 12016 / NCIMB 10680 / K1) protein is Bifunctional protein FolD.